Reading from the N-terminus, the 345-residue chain is MGQQKQRNRRWVLASRPHGAPVPENFRLEEDDVATPGEGQVLLRTVYLSLDPYMRGRMSDEPSYSPPVDIGGVMVGGTVSRVVESNHPDYQSGDWVLGYSGWQDYDISSGDDLVKLGDHPQNPSWSLGVLGMPGFTAYMGLLDIGQPKEGETLVVAAATGPVGATVGQIGKLKGCRVVGVAGGAEKCRHATEVLGFDVCLDHHADDFAEQLAKACPKGIDIYYENVGGKVFDAVLPLLNTSARIPVCGLVSSYNATELPPGPDRLPLLMATVLKKRIRLQGFIIAQDYGHRIHEFQREMGQWVKEDKIHYREEITDGLENAPQTFIGLLKGKNFGKVVIRVAGDD.

Over residues M1–R10 the composition is skewed to basic residues. Residues M1–E24 form a disordered region. NADP(+) is bound by residues K186, N225, and N333.

In terms of assembly, homodimer.

The catalysed reaction is tetrahydrocurcumin + 2 NADP(+) = curcumin + 2 NADPH + 2 H(+). The enzyme catalyses tetrahydrocurcumin + NADP(+) = dihydrocurcumin + NADPH + H(+). It catalyses the reaction dihydrocurcumin + NADP(+) = curcumin + NADPH + H(+). Inhibited by thiol-specific reagents (p-chloromercuribenzoate and 5,5'-dithio-bis-2-nitrobenzoate). Catalyzes the metal-independent reduction of curcumin to dihydrocurcumin (DHC) as an intermediate product, followed by further reduction to tetrahydrocurcumin (THC) as an end product. It also acts on 3-octene-2-one, 3-hepten-2-one, resveratrol, and trans-2-octenal. This is NADPH-dependent curcumin reductase from Escherichia coli (strain K12).